We begin with the raw amino-acid sequence, 93 residues long: Small ribosomal subunit protein uS17 (93 aa).

The protein belongs to the universal ribosomal protein uS17 family. As to quaternary structure, part of the 30S ribosomal subunit.

One of the primary rRNA binding proteins, it binds specifically to the 5'-end of 16S ribosomal RNA. The polypeptide is Small ribosomal subunit protein uS17 (Rhodococcus jostii (strain RHA1)).